We begin with the raw amino-acid sequence, 511 residues long: Inositol-3-phosphate synthase (511 aa).

The NAD(+) site is built by G70, N71, N72, D143, S179, I180, Q190, R193, S230, A231, N232, T233, G281, S282, D306, T309, N340, N341, D342, K355, G393, D394, D422, and S423.

This sequence belongs to the myo-inositol 1-phosphate synthase family. The cofactor is NAD(+).

The protein resides in the cytoplasm. The enzyme catalyses D-glucose 6-phosphate = 1D-myo-inositol 3-phosphate. The protein operates within polyol metabolism; myo-inositol biosynthesis; myo-inositol from D-glucose 6-phosphate: step 1/2. Key enzyme in myo-inositol biosynthesis pathway that catalyzes the conversion of glucose 6-phosphate to 1-myo-inositol 1-phosphate in a NAD-dependent manner. Rate-limiting enzyme in the synthesis of all inositol-containing compounds. In Dictyostelium discoideum (Social amoeba), this protein is Inositol-3-phosphate synthase (ino1).